The sequence spans 2841 residues: Neurofibromin (2841 aa).

Alanine 2 carries the N-acetylalanine modification. A phosphoserine mark is found at serine 866 and serine 878. The Ras-GAP domain occupies 1253–1484 (HLLYQLLWNM…DLARRFFLDI (232 aa)). The 159-residue stretch at 1582–1740 (EKEEFKALKT…ATLALEEDLK (159 aa)) folds into the CRAL-TRIO domain. The segment at 1582–1839 (EKEEFKALKT…RTRWELSQPD (258 aa)) is lipid binding. Phosphoserine occurs at positions 2190 and 2469. Threonine 2516 is modified (phosphothreonine). Serine 2517, serine 2523, serine 2525, and serine 2545 each carry phosphoserine. Residues 2557 to 2573 (KRQEMESGITTPPKMRR) carry the Bipartite nuclear localization signal motif. Residue threonine 2567 is modified to Phosphothreonine. Phosphoserine is present on residues serine 2599, serine 2804, and serine 2819. Residues 2786–2841 (SLATSQHSPGLDKENVELSPTAGHCNSGRTRHGSASQVQKQRSAGSFKRNSIKKIV) form a disordered region. Over residues 2818–2829 (GSASQVQKQRSA) the composition is skewed to polar residues.

In terms of assembly, interacts with HTR6. Interacts with SPRED2. In terms of processing, ubiquitinated by RNF7/RBX2, leading to its degradation. In terms of tissue distribution, expressed predominantly in brain, spinal cord and testis. Expressed predominantly in adrenal gland, kidney, ovary and lung. As to expression, widely and more weakly expressed. Predominantly expressed in adrenal gland. In terms of tissue distribution, widely and more weakly expressed. Expressed mainly in testis.

It is found in the nucleus. The protein localises to the nucleolus. It localises to the cell membrane. Stimulates the GTPase activity of Ras. NF1 shows greater affinity for Ras GAP, but lower specific activity. May be a regulator of Ras activity. The polypeptide is Neurofibromin (Nf1) (Mus musculus (Mouse)).